Here is a 501-residue protein sequence, read N- to C-terminus: Lysine--tRNA ligase (501 aa).

Residues Glu-412 and Glu-419 each coordinate Mg(2+).

This sequence belongs to the class-II aminoacyl-tRNA synthetase family. Homodimer. Mg(2+) is required as a cofactor.

Its subcellular location is the cytoplasm. It catalyses the reaction tRNA(Lys) + L-lysine + ATP = L-lysyl-tRNA(Lys) + AMP + diphosphate. The chain is Lysine--tRNA ligase from Dechloromonas aromatica (strain RCB).